The following is a 219-amino-acid chain: Histone H1.4 (219 aa).

A compositionally biased stretch (low complexity) spans 1–15; it reads MSETAPAAPAAPAPA. Positions 1–41 are disordered; the sequence is MSETAPAAPAAPAPAEKTPVKKKARKSAGAAKRKASGPPVS. S2 is modified (N-acetylserine). At S2 the chain carries Phosphoserine. Residue K17 is modified to N6-acetyllysine. T18 is modified (phosphothreonine). A compositionally biased stretch (basic residues) spans 20–35; sequence VKKKARKSAGAAKRKA. K26 is modified (N6-acetyllysine; alternate). The residue at position 26 (K26) is an N6-methyllysine; alternate. Residue K34 is modified to N6-(beta-hydroxybutyryl)lysine; alternate. K34 is modified (N6-succinyllysine; alternate). S36 carries the phosphoserine modification. One can recognise an H15 domain in the interval 36–109; that stretch reads SGPPVSELIT…GASGSFKLNK (74 aa). N6-(beta-hydroxybutyryl)lysine is present on K52. A Citrulline modification is found at R54. N6-(beta-hydroxybutyryl)lysine occurs at positions 64, 85, 90, and 106. Residues 92-219 are disordered; the sequence is TLVQTKGTGA…KPKKAAAKKK (128 aa). Residues 119–140 are compositionally biased toward basic residues; it reads KAKKAGAAKAKKPAGAAKKPKK. T146 bears the Phosphothreonine mark. Basic residues-rich tracts occupy residues 149–160 and 168–185; these read KSAKKTPKKAKK and KKAK…KKAP. Position 150 is an ADP-ribosylserine (S150). The residue at position 187 (S187) is a Phosphoserine. Basic residues predominate over residues 192–219; sequence KAVKPKAAKPKTAKPKAAKPKKAAAKKK.

It belongs to the histone H1/H5 family. H1 histones are progressively phosphorylated during the cell cycle, becoming maximally phosphorylated during late G2 phase and M phase, and being dephosphorylated sharply thereafter. Post-translationally, acetylated at Lys-26. Deacetylated at Lys-26 by SIRT1. In terms of processing, citrullination at Arg-54 (H1R54ci) by PADI4 takes place within the DNA-binding site of H1 and results in its displacement from chromatin and global chromatin decondensation, thereby promoting pluripotency and stem cell maintenance. ADP-ribosylated on Ser-150 in response to DNA damage.

The protein resides in the nucleus. It is found in the chromosome. In terms of biological role, histone H1 protein binds to linker DNA between nucleosomes forming the macromolecular structure known as the chromatin fiber. Histones H1 are necessary for the condensation of nucleosome chains into higher-order structured fibers. Also acts as a regulator of individual gene transcription through chromatin remodeling, nucleosome spacing and DNA methylation. This chain is Histone H1.4, found in Homo sapiens (Human).